The chain runs to 97 residues: Large ribosomal subunit protein uL23 (97 aa).

This sequence belongs to the universal ribosomal protein uL23 family. Part of the 50S ribosomal subunit. Contacts protein L29, and trigger factor when it is bound to the ribosome.

Functionally, one of the early assembly proteins it binds 23S rRNA. One of the proteins that surrounds the polypeptide exit tunnel on the outside of the ribosome. Forms the main docking site for trigger factor binding to the ribosome. The sequence is that of Large ribosomal subunit protein uL23 from Lactococcus lactis subsp. cremoris (strain SK11).